Consider the following 660-residue polypeptide: Acetyl-coenzyme A synthetase (660 aa).

Residues 197–200 (RGGK) and Thr317 contribute to the CoA site. ATP is bound by residues 397 to 399 (GEP), 421 to 426 (DTFWQT), Asp512, and Arg528. Ser536 is a CoA binding site. An ATP-binding site is contributed by Arg539. Mg(2+)-binding residues include Val550 and Val555. Lys625 is modified (N6-acetyllysine).

The protein belongs to the ATP-dependent AMP-binding enzyme family. Mg(2+) is required as a cofactor. Acetylated. Deacetylation by the SIR2-homolog deacetylase activates the enzyme.

The catalysed reaction is acetate + ATP + CoA = acetyl-CoA + AMP + diphosphate. Functionally, catalyzes the conversion of acetate into acetyl-CoA (AcCoA), an essential intermediate at the junction of anabolic and catabolic pathways. AcsA undergoes a two-step reaction. In the first half reaction, AcsA combines acetate with ATP to form acetyl-adenylate (AcAMP) intermediate. In the second half reaction, it can then transfer the acetyl group from AcAMP to the sulfhydryl group of CoA, forming the product AcCoA. This chain is Acetyl-coenzyme A synthetase, found in Cupriavidus metallidurans (strain ATCC 43123 / DSM 2839 / NBRC 102507 / CH34) (Ralstonia metallidurans).